We begin with the raw amino-acid sequence, 162 residues long: F protein (162 aa).

The segment at 1–23 (MSTNPKPQKKKTNVTPTVAHRTS) is disordered. Residues 13–23 (NVTPTVAHRTS) show a composition bias toward polar residues.

The protein resides in the host cytoplasm. Its subcellular location is the host perinuclear region. This Hepatitis C virus genotype 1a (isolate 1) (HCV) protein is F protein.